We begin with the raw amino-acid sequence, 148 residues long: Large ribosomal subunit protein bL9 (148 aa).

Belongs to the bacterial ribosomal protein bL9 family.

Binds to the 23S rRNA. The chain is Large ribosomal subunit protein bL9 from Oceanobacillus iheyensis (strain DSM 14371 / CIP 107618 / JCM 11309 / KCTC 3954 / HTE831).